The primary structure comprises 635 residues: Cilia- and flagella-associated protein 206 (635 aa).

Belongs to the CFAP206 family.

The protein localises to the cytoplasm. It localises to the cytoskeleton. Its subcellular location is the cilium axoneme. Functionally, may regulate cilium motility through its role in the assembly of the axonemal RS2 radial spoke. In Tetrahymena thermophila (strain SB210), this protein is Cilia- and flagella-associated protein 206.